Here is a 615-residue protein sequence, read N- to C-terminus: Cilia- and flagella-associated protein 52 (615 aa).

WD repeat units lie at residues 54–98, 101–142, 145–184, 232–275, 320–359, 362–401, 405–444, 449–488, 490–529, 533–572, and 575–614; these read GHSD…LIHR, LHKV…AICG, CNTN…NKLR, GPAK…AGTK, AHND…ELLR, VPNL…IIFT, AHQK…QTLE, DHKG…RRTS, FANT…AIRI, SDLD…CYFV, and AHSG…TLAD.

It belongs to the CFAP52 family.

The protein localises to the cytoplasm. It localises to the cell projection. It is found in the cilium. Its subcellular location is the flagellum. May play a role in cell growth and/or survival. The protein is Cilia- and flagella-associated protein 52 of Chlamydomonas reinhardtii (Chlamydomonas smithii).